We begin with the raw amino-acid sequence, 382 residues long: Protein phosphatase 1A (382 aa).

A lipid anchor (N-myristoyl glycine) is attached at glycine 2. A PPM-type phosphatase domain is found at arginine 23–phenylalanine 291. Positions 60, 61, 239, and 282 each coordinate Mn(2+). Residues serine 375 and serine 377 each carry the phosphoserine modification.

This sequence belongs to the PP2C family. Monomer. Interacts with SMAD2; the interaction dephosphorylates SMAD2 in its C-terminal SXS motif resulting in disruption of the SMAD2/SMAD4 complex, SMAD2 nuclear export and termination of the TGF-beta-mediated signaling. Interacts with SMAD2; the interaction dephosphorylates SMAD2 in its C-terminal SXS motif resulting in disruption of the SMAD2/SMAD4 complex, SMAD2 nuclear export and termination of the TGF-beta-mediated signaling. Interacts with the phosphorylated form of IKBKB/IKKB. The cofactor is Mg(2+). It depends on Mn(2+) as a cofactor. In terms of processing, N-myristoylation is essential for the recognition of its substrates for dephosphorylation.

It is found in the nucleus. It localises to the cytoplasm. The protein localises to the cytosol. The protein resides in the membrane. The catalysed reaction is O-phospho-L-seryl-[protein] + H2O = L-seryl-[protein] + phosphate. It catalyses the reaction O-phospho-L-threonyl-[protein] + H2O = L-threonyl-[protein] + phosphate. Its function is as follows. Enzyme with a broad specificity. Negatively regulates TGF-beta signaling through dephosphorylating SMAD2 and SMAD3, resulting in their dissociation from SMAD4, nuclear export of the SMADs and termination of the TGF-beta-mediated signaling. Dephosphorylates PRKAA1 and PRKAA2. Plays an important role in the termination of TNF-alpha-mediated NF-kappa-B activation through dephosphorylating and inactivating IKBKB/IKKB. The chain is Protein phosphatase 1A (PPM1A) from Oryctolagus cuniculus (Rabbit).